A 159-amino-acid polypeptide reads, in one-letter code: Photosystem I reaction center subunit XI (159 aa).

A run of 3 helical transmembrane segments spans residues leucine 53–leucine 73, leucine 84–valine 104, and phenylalanine 125–glutamate 145.

The protein belongs to the PsaL family.

It is found in the cellular thylakoid membrane. In Cyanothece sp. (strain PCC 7425 / ATCC 29141), this protein is Photosystem I reaction center subunit XI.